The chain runs to 223 residues: MDTMTLFTTSATRSRRATASIVAGMTLAGAAAVGFSAPAQAATVDTWDRLAECESNGTWDINTGNGFYGGVQFTLSSWQAVGGEGYPHQASKAEQIKRAEILQDLQGWGAWPLCSQKLGLTQADADAGDVDATEAAPVAVERTATVQRQSAADEAAAEQAAAAEQAVVAEAETIVVKSGDSLWTLANEYEVEGGWTALYEANKGAVSDAAVIYVGQELVLPQA.

An N-terminal signal peptide occupies residues 1 to 41 (MDTMTLFTTSATRSRRATASIVAGMTLAGAAAVGFSAPAQA). The interval 119-223 (GLTQADADAG…VGQELVLPQA (105 aa)) is not required for resuscitation activity. Residues 172–220 (ETIVVKSGDSLWTLANEYEVEGGWTALYEANKGAVSDAAVIYVGQELVL) form the LysM domain.

Belongs to the transglycosylase family. Rpf subfamily. May be subject to further C-terminal cleavage as the protein identified in gels is smaller than is expected.

It localises to the secreted. It is found in the cell surface. With respect to regulation, activity on the artificial substrate MUF tri-NAG is inhibited by 2-nitrophenylthiocyanates (NPT) compounds. In terms of biological role, factor that stimulates resuscitation of dormant cells. Has peptidoglycan (PG) hydrolytic activity. Has little to no effect on actively-growing cells. PG fragments could either directly activate the resuscitation pathway of dormant bacteria or serve as a substrate for endogenous Rpf, resulting in low molecular weight products with resuscitation activity. In pM quantities promotes the resuscitation and growth of dormant, nongrowing cells from M.luteus in addition to Mycobacterium tuberculosis, M.avium, M.bovis, M.kansaii and M.smegmatis. Hydrolyzes endogeneous cell walls, peptidoglycan preparations from Mycobacterium tuberculosis and M.smegmatis as well as an artificial lysozyme substrate 4-methylumbelliferyl-beta-D-N,N',N''-triacetylchitotrioside (MUF tri-NAG). Overexpression in E.coli (when the enzyme is targeted to the periplasm) causes cell lysis. This is Resuscitation-promoting factor Rpf (rpf) from Micrococcus luteus (Micrococcus lysodeikticus).